Consider the following 530-residue polypeptide: Probable basic-leucine zipper transcription factor L (530 aa).

Composition is skewed to low complexity over residues 1–17 (MYSP…SPES) and 24–39 (SINN…ANQS). The tract at residues 1 to 76 (MYSPSSPQSS…QSAALSRSRK (76 aa)) is disordered. One can recognise a bZIP domain in the interval 55–118 (VKKRQVRLLK…FETKSRLEFL (64 aa)). Residues 56 to 77 (KKRQVRLLKNRQSAALSRSRKK) form a basic motif region. The tract at residues 83–104 (LESKAQELTHSTQELHVQYNKI) is leucine-zipper. Disordered regions lie at residues 142 to 177 (NNIK…TTPV), 216 to 258 (SQNK…SPTP), and 389 to 481 (HHHH…SQIN). Composition is skewed to low complexity over residues 149 to 176 (RSNS…STTP) and 220 to 247 (NNNN…NTTN). Over residues 248–257 (LLDQQQQSPT) the composition is skewed to polar residues. Residues 436 to 478 (SSSPSSSSTSSPSTSSPSTPKSMGFPSPIFIGSSGSGPSSSGS) are compositionally biased toward low complexity.

The protein belongs to the bZIP family.

It localises to the nucleus. Its function is as follows. Probable transcriptional regulator. In Dictyostelium discoideum (Social amoeba), this protein is Probable basic-leucine zipper transcription factor L (bzpL).